Here is a 405-residue protein sequence, read N- to C-terminus: Transposase from transposon Tn1545 (405 aa).

The 85-residue stretch at 79-163 folds into the Core-binding (CB) domain; sequence GKKMTLCQLY…SLKASFYIAI (85 aa). The 207-residue stretch at 186-392 folds into the Tyr recombinase domain; it reads VPKTVLTEEQ…TFDSAMAEMK (207 aa). Residues Arg-225, Lys-264, His-343, Arg-346, and His-369 contribute to the active site. The O-(3'-phospho-DNA)-tyrosine intermediate role is filled by Tyr-379.

It belongs to the 'phage' integrase family.

The chain is Transposase from transposon Tn1545 (int) from Streptococcus agalactiae serotype V (strain ATCC BAA-611 / 2603 V/R).